The sequence spans 224 residues: MSSGEPAAVSIPIHDHHGKAPATSSAVPAAAAAAPAAAPAVAPRKVGIPFFRRGDHHRGSRCLAFLDFILRIAAFGPALAAAISTGTSDETLSVFTEFYQFRARFDDFPAFLFFLVANAIVAGYLVLSLPFSAVLVIRPQTIGLRLLLLVCDMIMAAMLTAAASAAAAIVDLAHNGNLRANWVAICMQFHGFCQRTSGSVVASFLTVVILMFLVILAACSIRKR.

A disordered region spans residues 1–22 (MSSGEPAAVSIPIHDHHGKAPA). The Cytoplasmic portion of the chain corresponds to 1–62 (MSSGEPAAVS…RGDHHRGSRC (62 aa)). A helical membrane pass occupies residues 63–83 (LAFLDFILRIAAFGPALAAAI). At 84 to 110 (STGTSDETLSVFTEFYQFRARFDDFPA) the chain is on the extracellular side. Residues 111-131 (FLFFLVANAIVAGYLVLSLPF) traverse the membrane as a helical segment. The Cytoplasmic portion of the chain corresponds to 132 to 145 (SAVLVIRPQTIGLR). A helical membrane pass occupies residues 146–166 (LLLLVCDMIMAAMLTAAASAA). The Extracellular portion of the chain corresponds to 167–200 (AAIVDLAHNGNLRANWVAICMQFHGFCQRTSGSV). The chain crosses the membrane as a helical span at residues 201-221 (VASFLTVVILMFLVILAACSI). At 222–224 (RKR) the chain is on the cytoplasmic side.

It belongs to the Casparian strip membrane proteins (CASP) family. In terms of assembly, homodimer and heterodimers.

It localises to the cell membrane. Its function is as follows. Regulates membrane-cell wall junctions and localized cell wall deposition. Required for establishment of the Casparian strip membrane domain (CSD) and the subsequent formation of Casparian strips, a cell wall modification of the root endodermis that determines an apoplastic barrier between the intraorganismal apoplasm and the extraorganismal apoplasm and prevents lateral diffusion. The polypeptide is Casparian strip membrane protein 1 (Oryza sativa subsp. indica (Rice)).